Consider the following 52-residue polypeptide: Small ribosomal subunit protein uS14 (52 aa).

The Zn(2+) site is built by cysteine 17, cysteine 20, cysteine 35, and cysteine 38.

It belongs to the universal ribosomal protein uS14 family. Zinc-binding uS14 subfamily. As to quaternary structure, part of the 30S ribosomal subunit. The cofactor is Zn(2+).

Functionally, binds 16S rRNA, required for the assembly of 30S particles. The protein is Small ribosomal subunit protein uS14 of Halobacterium salinarum (strain ATCC 700922 / JCM 11081 / NRC-1) (Halobacterium halobium).